The following is a 343-amino-acid chain: F17c-G fimbrial adhesin (343 aa).

A signal peptide spans 1 to 22 (MTNFYKVFLAVFILVCCNISHA). Residues 23-199 (AVSFIGSTEN…LNPFTLNDTV (177 aa)) are receptor-binding lectin domain. A carbohydrate-binding positions include 65-66 (AN), 110-111 (DT), and 138-141 (STQG). Cys75 and Cys132 are oxidised to a cystine. The fimbrillin-binding domain stretch occupies residues 200-343 (TSCRLLTPSA…GISTFTFSYQ (144 aa)). The tract at residues 287–307 (LKFGPDSPVKGNENQWQLSTG) is disordered. Polar residues predominate over residues 298 to 307 (NENQWQLSTG).

It belongs to the fimbrial protein family.

It is found in the fimbrium. Its function is as follows. Essential fimbrial adhesion factor that mediates binding to N-acetylglucosamine-containing receptors in the host intestinal microvilli, leading to colonization of the intestinal tissue, and diarrhea or septicemia. Also confers adhesiveness to laminin and basement membranes. The polypeptide is F17c-G fimbrial adhesin (f17cG) (Escherichia coli).